The following is a 423-amino-acid chain: uncharacterized protein (423 aa).

It belongs to the asfivirus E423R family.

It localises to the virion. This is an uncharacterized protein from African swine fever virus (isolate Tick/Malawi/Lil 20-1/1983) (ASFV).